Here is a 586-residue protein sequence, read N- to C-terminus: Membrane protein insertase YidC (586 aa).

5 helical membrane passes run 5–25, 371–391, 436–456, 486–506, and 522–542; these read TLIG…LMAP, GVII…LTMA, LGGC…FYVF, IPLY…AVFF, and FMMY…PSGL.

This sequence belongs to the OXA1/ALB3/YidC family. Type 1 subfamily. As to quaternary structure, interacts with the Sec translocase complex via SecD. Specifically interacts with transmembrane segments of nascent integral membrane proteins during membrane integration.

It localises to the cell inner membrane. Its function is as follows. Required for the insertion and/or proper folding and/or complex formation of integral membrane proteins into the membrane. Involved in integration of membrane proteins that insert both dependently and independently of the Sec translocase complex, as well as at least some lipoproteins. Aids folding of multispanning membrane proteins. This is Membrane protein insertase YidC from Chloroherpeton thalassium (strain ATCC 35110 / GB-78).